Reading from the N-terminus, the 475-residue chain is Putative poly(A) polymerase catalytic subunit (475 aa).

Belongs to the poxviridae poly(A) polymerase catalytic subunit family. Highly divergent.

The protein resides in the virion. It catalyses the reaction RNA(n) + ATP = RNA(n)-3'-adenine ribonucleotide + diphosphate. Its function is as follows. Polymerase that creates the 3'-poly(A) tail of mRNA's. The sequence is that of Putative poly(A) polymerase catalytic subunit from Ornithodoros (relapsing fever ticks).